A 197-amino-acid chain; its full sequence is 7-methyl-GTP pyrophosphatase (197 aa).

Residue Asp-69 is the Proton acceptor of the active site.

It belongs to the Maf family. YceF subfamily. It depends on a divalent metal cation as a cofactor.

The protein localises to the cytoplasm. It carries out the reaction N(7)-methyl-GTP + H2O = N(7)-methyl-GMP + diphosphate + H(+). Functionally, nucleoside triphosphate pyrophosphatase that hydrolyzes 7-methyl-GTP (m(7)GTP). May have a dual role in cell division arrest and in preventing the incorporation of modified nucleotides into cellular nucleic acids. In Pectobacterium atrosepticum (strain SCRI 1043 / ATCC BAA-672) (Erwinia carotovora subsp. atroseptica), this protein is 7-methyl-GTP pyrophosphatase.